Here is a 503-residue protein sequence, read N- to C-terminus: Palmitoleoyl-protein carboxylesterase NOTUM (503 aa).

A signal peptide spans 1-19 (MGGEVRVLLLLGLLHWVGG). Residues 23 to 53 (RKTWRRRGQQPPQPPPPPPLPQRAEVEPGAG) form a disordered region. The segment covering 33–43 (PPQPPPPPPLP) has biased composition (pro residues). S88 carries the phosphoserine modification. N-linked (GlcNAc...) asparagine glycosylation is present at N103. Active-site charge relay system residues include S239, D347, and H396.

The protein belongs to the pectinacetylesterase family. Notum subfamily. As to expression, widely expressed. Expressed in lung, ovary, kidney, liver and brain. Not detected in thymus, heart, spleen, stomach, skeletal muscle and bone marrow.

It localises to the secreted. The catalysed reaction is [Wnt protein]-O-(9Z)-hexadecenoyl-L-serine + H2O = [Wnt protein]-L-serine + (9Z)-hexadecenoate + H(+). Its function is as follows. Carboxylesterase that acts as a key negative regulator of the Wnt signaling pathway by specifically mediating depalmitoleoylation of WNT proteins. Serine palmitoleoylation of WNT proteins is required for efficient binding to frizzled receptors. This is Palmitoleoyl-protein carboxylesterase NOTUM from Mus musculus (Mouse).